Consider the following 245-residue polypeptide: Eukaryotic translation initiation factor 6 (245 aa).

Residues S174 and S175 each carry the phosphoserine; by CK1 modification.

This sequence belongs to the eIF-6 family. Monomer. Associates with the 60S ribosomal subunit. Phosphorylation at Ser-174 and Ser-175 promotes nuclear export.

The protein localises to the cytoplasm. The protein resides in the nucleus. Its subcellular location is the nucleolus. Functionally, binds to the 60S ribosomal subunit and prevents its association with the 40S ribosomal subunit to form the 80S initiation complex in the cytoplasm. Is also involved in ribosome biogenesis. Associates with pre-60S subunits in the nucleus and is involved in its nuclear export. In Candida albicans (strain SC5314 / ATCC MYA-2876) (Yeast), this protein is Eukaryotic translation initiation factor 6.